We begin with the raw amino-acid sequence, 771 residues long: Solute carrier family 7 member 14 (771 aa).

6 helical membrane-spanning segments follow: residues 58–78 (LISLGVGSCVGTGMYVVSGLV), 83–103 (AGPGVIVSFIIAAVASILSGV), 119–141 (AYTYSYVTVGEFVAFFIGWNLIL), 187–207 (YPDLLALVIAVIVTIIVALGV), 216–236 (VLNVLNLAVWVFIMIAGLFFI), and 251–271 (WSGVLQGAATCFYAFIGFDII). A glycan (N-linked (GlcNAc...) asparagine) is linked at asparagine 282. The next 4 membrane-spanning stretches (helical) occupy residues 291 to 311 (ASLVICLTAYVSVSMILTLMV), 336 to 356 (FVVAIGSVAGLTVSLLGSLFP), 384 to 404 (PVVACIVSGFLAALLSLLVSL), and 407 to 427 (LIEMMSIGTLLAYTLVSVCVL). Phosphoserine is present on residues serine 465, serine 468, serine 475, and serine 488. The next 4 membrane-spanning stretches (helical) occupy residues 565–585 (VTICVLLLFILMFIFCSFIIF), 596–616 (WAILLVVLMMLLISVLVFVIL), 628–648 (MAPCLPFVPAFAMLVNIYLML), and 655–675 (WIRFAVWCFVGMLIYFGYGIW). Residue asparagine 676 is glycosylated (N-linked (GlcNAc...) asparagine). The tract at residues 735–771 (SDAKANSRTSSKAKSKSKHKQNSEALIANDELDCSPE) is disordered. The span at 745–754 (SKAKSKSKHK) shows a compositional bias: basic residues. 2 positions are modified to phosphoserine: serine 757 and serine 769.

Belongs to the amino acid-polyamine-organocation (APC) superfamily. Expressed in retina, brain and spinal cord. In the retina, expressed in the inner nuclear layer and photoreceptor layer (at protein level). Expressed in liver, spleen, lung, kidney intestine and brain (at protein level).

The protein resides in the lysosome membrane. The catalysed reaction is 4-aminobutanoate(in) = 4-aminobutanoate(out). Its function is as follows. Imports 4-aminobutanoate (GABA) into lysosomes. May act as a GABA sensor that regulates mTORC2-dependent INS signaling and gluconeogenesis. The transport mechanism and substrate selectivity remain to be elucidated. The polypeptide is Solute carrier family 7 member 14 (Mus musculus (Mouse)).